A 131-amino-acid polypeptide reads, in one-letter code: SPbeta prophage-derived uncharacterized protein YomZ (131 aa).

The polypeptide is SPbeta prophage-derived uncharacterized protein YomZ (yomZ) (Bacillus subtilis (strain 168)).